Here is a 351-residue protein sequence, read N- to C-terminus: Hydroxymethylglutaryl-CoA synthase (351 aa).

Asp-30 provides a ligand contact to (3S)-3-hydroxy-3-methylglutaryl-CoA. The Proton donor/acceptor role is filled by Glu-82. (3S)-3-hydroxy-3-methylglutaryl-CoA contacts are provided by Cys-114, Ser-155, Thr-203, and His-236. The active-site Acyl-thioester intermediate is Cys-114. His-236 serves as the catalytic Proton donor/acceptor. CoA is bound at residue Arg-241. Arg-245, Asn-268, and Ser-298 together coordinate (3S)-3-hydroxy-3-methylglutaryl-CoA.

It belongs to the thiolase-like superfamily. Archaeal HMG-CoA synthase family. In terms of assembly, interacts with acetoacetyl-CoA thiolase that catalyzes the precedent step in the pathway and with a DUF35 protein. The acetoacetyl-CoA thiolase/HMG-CoA synthase complex channels the intermediate via a fused CoA-binding site, which allows for efficient coupling of the endergonic thiolase reaction with the exergonic HMGCS reaction.

It catalyses the reaction acetoacetyl-CoA + acetyl-CoA + H2O = (3S)-3-hydroxy-3-methylglutaryl-CoA + CoA + H(+). Its pathway is metabolic intermediate biosynthesis; (R)-mevalonate biosynthesis; (R)-mevalonate from acetyl-CoA: step 2/3. In terms of biological role, catalyzes the condensation of acetyl-CoA with acetoacetyl-CoA to form 3-hydroxy-3-methylglutaryl-CoA (HMG-CoA). Functions in the mevalonate (MVA) pathway leading to isopentenyl diphosphate (IPP), a key precursor for the biosynthesis of isoprenoid compounds that are building blocks of archaeal membrane lipids. The protein is Hydroxymethylglutaryl-CoA synthase of Pyrobaculum neutrophilum (strain DSM 2338 / JCM 9278 / NBRC 100436 / V24Sta) (Thermoproteus neutrophilus).